The sequence spans 292 residues: Galactinol synthase 2 (292 aa).

Lys65 is an active-site residue. The Mn(2+) site is built by Asp81, Asp83, and His218.

The protein belongs to the glycosyltransferase 8 family. Galactosyltransferase subfamily. A divalent metal cation serves as cofactor. Present in phloem-associated intermediary cells. Weakly expressed in leaves.

The protein resides in the cytoplasm. It carries out the reaction myo-inositol + UDP-alpha-D-galactose = alpha-D-galactosyl-(1-&gt;3)-1D-myo-inositol + UDP + H(+). Its function is as follows. May promote plant stress tolerance. Galactinol synthase mainly involved in the biosynthesis of transport raffinose family oligosaccharides (RFOs) that function as osmoprotectants. The chain is Galactinol synthase 2 (GOLS2) from Ajuga reptans (Bugle).